The following is a 277-amino-acid chain: Large ribosomal subunit protein uL2 (277 aa).

Disordered regions lie at residues 1-23 (MAIK…DFAE), 36-58 (PLHK…GGGH), and 219-277 (TVRG…RKNK). Residues 8-20 (PTSNGRRGMTSSD) show a composition bias toward polar residues. The segment covering 258–277 (KTRKKKNKSDKFIVRRRKNK) has biased composition (basic residues).

It belongs to the universal ribosomal protein uL2 family. Part of the 50S ribosomal subunit. Forms a bridge to the 30S subunit in the 70S ribosome.

One of the primary rRNA binding proteins. Required for association of the 30S and 50S subunits to form the 70S ribosome, for tRNA binding and peptide bond formation. It has been suggested to have peptidyltransferase activity; this is somewhat controversial. Makes several contacts with the 16S rRNA in the 70S ribosome. The polypeptide is Large ribosomal subunit protein uL2 (Bacillus licheniformis (strain ATCC 14580 / DSM 13 / JCM 2505 / CCUG 7422 / NBRC 12200 / NCIMB 9375 / NCTC 10341 / NRRL NRS-1264 / Gibson 46)).